The chain runs to 114 residues: Large ribosomal subunit protein uL22c (114 aa).

The protein belongs to the universal ribosomal protein uL22 family. In terms of assembly, part of the 50S ribosomal subunit.

It localises to the plastid. The protein localises to the chloroplast. In terms of biological role, this protein binds specifically to 23S rRNA. The globular domain of the protein is located near the polypeptide exit tunnel on the outside of the subunit, while an extended beta-hairpin is found that lines the wall of the exit tunnel in the center of the 70S ribosome. In Gracilaria tenuistipitata var. liui (Red alga), this protein is Large ribosomal subunit protein uL22c (rpl22).